The following is a 934-amino-acid chain: AP-2 complex subunit alpha (934 aa).

The disordered stretch occupies residues 623 to 670 (RVPENAEIRETKSPVPNSHNNAHSNAQTNHTSSANNANASSDLLGLST). Positions 636-645 (PVPNSHNNAH) are enriched in polar residues. The segment covering 646 to 663 (SNAQTNHTSSANNANASS) has biased composition (low complexity).

Belongs to the adapter complexes large subunit family. In terms of assembly, adaptor protein complex 2 (AP-2) is a heterotetramer composed of two large adaptins (alpha-type and beta-type subunits), a medium adaptin (mu-type subunit AP50) and a small adaptin (sigma-type subunit AP17).

The protein resides in the cell membrane. It localises to the membrane. The protein localises to the coated pit. Adaptins are components of the adapter complexes which link clathrin to receptors in coated vesicles. Clathrin-associated protein complexes are believed to interact with the cytoplasmic tails of membrane proteins, leading to their selection and concentration. Alpha adaptin is a subunit of the plasma membrane adapter. The sequence is that of AP-2 complex subunit alpha from Anopheles gambiae (African malaria mosquito).